The chain runs to 96 residues: Co-chaperonin GroES (96 aa).

The protein belongs to the GroES chaperonin family. Heptamer of 7 subunits arranged in a ring. Interacts with the chaperonin GroEL.

The protein localises to the cytoplasm. Its function is as follows. Together with the chaperonin GroEL, plays an essential role in assisting protein folding. The GroEL-GroES system forms a nano-cage that allows encapsulation of the non-native substrate proteins and provides a physical environment optimized to promote and accelerate protein folding. GroES binds to the apical surface of the GroEL ring, thereby capping the opening of the GroEL channel. The chain is Co-chaperonin GroES from Haemophilus influenzae (strain 86-028NP).